We begin with the raw amino-acid sequence, 539 residues long: uncharacterized protein (539 aa).

Ser216 functions as the Acyl-ester intermediate in the catalytic mechanism.

It belongs to the type-B carboxylesterase/lipase family.

Its subcellular location is the cytoplasm. The protein resides in the nucleus. This is an uncharacterized protein from Schizosaccharomyces pombe (strain 972 / ATCC 24843) (Fission yeast).